Consider the following 20-residue polypeptide: Cytochrome c oxidase subunit 6A1, mitochondrial (20 aa).

The protein belongs to the cytochrome c oxidase subunit 6A family. As to quaternary structure, component of the cytochrome c oxidase (complex IV, CIV), a multisubunit enzyme composed of 14 subunits. The complex is composed of a catalytic core of 3 subunits MT-CO1, MT-CO2 and MT-CO3, encoded in the mitochondrial DNA, and 11 supernumerary subunits COX4I, COX5A, COX5B, COX6A, COX6B, COX6C, COX7A, COX7B, COX7C, COX8 and NDUFA4, which are encoded in the nuclear genome. The complex exists as a monomer or a dimer and forms supercomplexes (SCs) in the inner mitochondrial membrane with NADH-ubiquinone oxidoreductase (complex I, CI) and ubiquinol-cytochrome c oxidoreductase (cytochrome b-c1 complex, complex III, CIII), resulting in different assemblies (supercomplex SCI(1)III(2)IV(1) and megacomplex MCI(2)III(2)IV(2)). Liver specific isoform.

The protein localises to the mitochondrion inner membrane. Its pathway is energy metabolism; oxidative phosphorylation. In terms of biological role, component of the cytochrome c oxidase, the last enzyme in the mitochondrial electron transport chain which drives oxidative phosphorylation. The respiratory chain contains 3 multisubunit complexes succinate dehydrogenase (complex II, CII), ubiquinol-cytochrome c oxidoreductase (cytochrome b-c1 complex, complex III, CIII) and cytochrome c oxidase (complex IV, CIV), that cooperate to transfer electrons derived from NADH and succinate to molecular oxygen, creating an electrochemical gradient over the inner membrane that drives transmembrane transport and the ATP synthase. Cytochrome c oxidase is the component of the respiratory chain that catalyzes the reduction of oxygen to water. Electrons originating from reduced cytochrome c in the intermembrane space (IMS) are transferred via the dinuclear copper A center (CU(A)) of subunit 2 and heme A of subunit 1 to the active site in subunit 1, a binuclear center (BNC) formed by heme A3 and copper B (CU(B)). The BNC reduces molecular oxygen to 2 water molecules unsing 4 electrons from cytochrome c in the IMS and 4 protons from the mitochondrial matrix. This Canis lupus familiaris (Dog) protein is Cytochrome c oxidase subunit 6A1, mitochondrial (COX6A1).